We begin with the raw amino-acid sequence, 1529 residues long: DNA (cytosine-5)-methyltransferase 1B (1529 aa).

Disordered stretches follow at residues 1–56 (MVKS…RAAC) and 674–706 (DDEL…TRSR). Basic and acidic residues predominate over residues 21–35 (QKKDEDTTDKGKLDE). The span at 674–694 (DDELEENEDEDAEEEAQIEEE) shows a compositional bias: acidic residues. Residues 697–706 (SKTPPSTRSR) show a composition bias toward polar residues. BAH domains are found at residues 741 to 873 (LRIN…FSLP) and 910 to 1049 (ITYN…KQLP). Positions 1093–1527 (LATLDIFAGC…RKLKEAVDAK (435 aa)) constitute an SAM-dependent MTase C5-type domain. Cys-1198 is a catalytic residue.

The protein belongs to the class I-like SAM-binding methyltransferase superfamily. C5-methyltransferase family. Expressed in roots and inflorescences. Expressed in roots, panicles, anthers, pistils, endosperm and imbibed embryos. Expressed in tissues containing actively replicating and dividing cells, such as shoot and root meristems.

The protein localises to the nucleus. The catalysed reaction is a 2'-deoxycytidine in DNA + S-adenosyl-L-methionine = a 5-methyl-2'-deoxycytidine in DNA + S-adenosyl-L-homocysteine + H(+). Its function is as follows. Major CG methylase that methylates chromatin CpG residues and maintains DNA methylation. Plays a major role in genomic imprinting, regulation of embryogenesis and seed viability. Maintains DNA methylation at the FIE1 gene locus in the embryo. The sequence is that of DNA (cytosine-5)-methyltransferase 1B (MET1B) from Oryza sativa subsp. japonica (Rice).